The following is a 110-amino-acid chain: Small ribosomal subunit protein bS16 (110 aa).

The disordered stretch occupies residues 84-110 (KRTARNNPEKAVPRKERKAQAEAAAKS). A compositionally biased stretch (basic and acidic residues) spans 90 to 103 (NPEKAVPRKERKAQ).

Belongs to the bacterial ribosomal protein bS16 family.

The chain is Small ribosomal subunit protein bS16 from Nitrobacter hamburgensis (strain DSM 10229 / NCIMB 13809 / X14).